We begin with the raw amino-acid sequence, 287 residues long: Probable phosphite transport system-binding protein PtxB (287 aa).

Residues 1 to 23 form the signal peptide; that stretch reads MKRLSALLLTCLLSAVSSLSALA.

This sequence belongs to the phosphate/phosphite/phosphonate binding protein family.

Its function is as follows. Probably forms part of a binding-protein-dependent phosphite transporter. Required for oxidation of phosphite to phosphate. The protein is Probable phosphite transport system-binding protein PtxB (ptxB) of Stutzerimonas stutzeri (Pseudomonas stutzeri).